The primary structure comprises 126 residues: Small ribosomal subunit protein uS12c (126 aa).

The protein belongs to the universal ribosomal protein uS12 family. In terms of assembly, part of the 30S ribosomal subunit.

It localises to the plastid. Its subcellular location is the chloroplast. Its function is as follows. With S4 and S5 plays an important role in translational accuracy. Located at the interface of the 30S and 50S subunits. In Trieres chinensis (Marine centric diatom), this protein is Small ribosomal subunit protein uS12c (rps12).